Reading from the N-terminus, the 326-residue chain is Isopenicillin N synthase (326 aa).

Isopenicillin N is bound by residues R84, Y88, and Y186. The N-[(5S)-5-amino-5-carboxypentanoyl]-L-cysteinyl-D-valine site is built by R84, Y88, Y186, H209, and D211. Positions L183 to L283 constitute a Fe2OG dioxygenase domain. Positions 209, 211, and 265 each coordinate Fe(2+). R274 is a binding site for 2-oxoglutarate. Isopenicillin N is bound at residue S276. Residue S276 coordinates N-[(5S)-5-amino-5-carboxypentanoyl]-L-cysteinyl-D-valine.

Belongs to the iron/ascorbate-dependent oxidoreductase family. The cofactor is Fe cation. It depends on L-ascorbate as a cofactor.

It catalyses the reaction N-[(5S)-5-amino-5-carboxypentanoyl]-L-cysteinyl-D-valine + O2 = isopenicillin N + 2 H2O. It participates in antibiotic biosynthesis; penicillin G biosynthesis; penicillin G from L-alpha-aminoadipate and L-cysteine and L-valine: step 2/3. Its function is as follows. Removes, in the presence of oxygen, 4 hydrogen atoms from delta-L-(alpha-aminoadipyl)-L-cysteinyl-D-valine (ACV) to form the azetidinone and thiazolidine rings of isopenicillin. The sequence is that of Isopenicillin N synthase (pcbC) from Flavobacterium sp. (strain SC 12,154).